The chain runs to 1506 residues: Phosphatidylinositol 3-kinase C2 domain-containing subunit gamma (1506 aa).

The segment at 1 to 34 is disordered; it reads MAYSWQTEPNRTEPQEDGSDTQQFHHTNQHLSSR. Polar residues predominate over residues 20 to 34; the sequence is DTQQFHHTNQHLSSR. The PI3K-RBD domain maps to 285-371; the sequence is DTKFRVKISI…IQLHLQKNRD (87 aa). The C2 PI3K-type domain maps to 541–689; it reads LQSHLSFTVC…SPLTLQIDFP (149 aa). The PIK helical domain occupies 704-880; that stretch reads RTDHEEPPRE…QELLAALQFC (177 aa). In terms of domain architecture, PI3K/PI4K catalytic spans 949 to 1227; it reads DRDACSYFTS…KIKESLECFP (279 aa). A G-loop region spans residues 955–961; that stretch reads YFTSNAS. The tract at residues 1091–1099 is catalytic loop; it reads GVCDRHNDN. Positions 1110 to 1136 are activation loop; it reads HIDFGKFLGHAQTFGGIKRDRAPFIFT. The region spanning 1260 to 1372 is the PX domain; sequence LNKTRTIQRV…SFFLSEHIQP (113 aa). The 126-residue stretch at 1381–1506 folds into the C2 domain; it reads DPGENSLDKS…KWYPLGNSII (126 aa).

It belongs to the PI3/PI4-kinase family. As to expression, expressed predominantly in liver. Also found in kidney, lung and lymphoid tissue. Down-regulated in BeF3 cells expressing the BCR-ABL oncogene p185.

The protein localises to the membrane. It carries out the reaction a 1,2-diacyl-sn-glycero-3-phospho-(1D-myo-inositol 4-phosphate) + ATP = a 1,2-diacyl-sn-glycero-3-phospho-(1D-myo-inositol-3,4-bisphosphate) + ADP + H(+). It catalyses the reaction a 1,2-diacyl-sn-glycero-3-phospho-(1D-myo-inositol) + ATP = a 1,2-diacyl-sn-glycero-3-phospho-(1D-myo-inositol-3-phosphate) + ADP + H(+). In terms of biological role, generates phosphatidylinositol 3-phosphate (PtdIns3P) and phosphatidylinositol 3,4-bisphosphate (PtdIns(3,4)P2) that act as second messengers. May play a role in SDF1A-stimulated chemotaxis. The sequence is that of Phosphatidylinositol 3-kinase C2 domain-containing subunit gamma (Pik3c2g) from Mus musculus (Mouse).